A 780-amino-acid chain; its full sequence is Copper-exporting P-type ATPase (780 aa).

Positions 2-67 constitute an HMA domain; sequence QRIQLNITGM…AVRRAALCTD (66 aa). 2 residues coordinate Cu(+): cysteine 13 and cysteine 16. Helical transmembrane passes span 89–109, 114–134, 153–173, 185–205, 348–368, and 374–394; these read LAVA…FAVL, FPGW…WAAW, TLIS…VFGH, ALLG…VFVL, VFVP…LIAG, and VFSA…GLAT. The 4-aspartylphosphate intermediate role is filled by aspartate 430. 2 helical membrane-spanning segments follow: residues 680-698 and 704-722; these read FNMV…IAAA and LVAG…SNSL.

The protein belongs to the cation transport ATPase (P-type) (TC 3.A.3) family. Type IB subfamily.

The protein resides in the cell membrane. The catalysed reaction is Cu(+)(in) + ATP + H2O = Cu(+)(out) + ADP + phosphate + H(+). Its function is as follows. Involved in copper export. The polypeptide is Copper-exporting P-type ATPase (ctpA) (Mycobacterium leprae (strain TN)).